Here is a 405-residue protein sequence, read N- to C-terminus: L-carnitine CoA-transferase (405 aa).

CoA contacts are provided by K97 and R104. D169 acts as the Nucleophile in catalysis.

This sequence belongs to the CoA-transferase III family. CaiB subfamily. In terms of assembly, homodimer.

It is found in the cytoplasm. It carries out the reaction crotonobetainyl-CoA + (R)-carnitine = crotonobetaine + (R)-carnitinyl-CoA. The catalysed reaction is 4-(trimethylamino)butanoyl-CoA + (R)-carnitine = (R)-carnitinyl-CoA + 4-(trimethylamino)butanoate. The protein operates within amine and polyamine metabolism; carnitine metabolism. Its function is as follows. Catalyzes the reversible transfer of the CoA moiety from gamma-butyrobetainyl-CoA to L-carnitine to generate L-carnitinyl-CoA and gamma-butyrobetaine. Is also able to catalyze the reversible transfer of the CoA moiety from gamma-butyrobetainyl-CoA or L-carnitinyl-CoA to crotonobetaine to generate crotonobetainyl-CoA. This Shigella flexneri serotype 5b (strain 8401) protein is L-carnitine CoA-transferase.